A 255-amino-acid chain; its full sequence is Ribonuclease HII (255 aa).

The region spanning 72–255 is the RNase H type-2 domain; that stretch reads AIICGIDEVG…KSFEPIKSLL (184 aa). 3 residues coordinate a divalent metal cation: Asp78, Glu79, and Asp170.

Belongs to the RNase HII family. Mn(2+) serves as cofactor. It depends on Mg(2+) as a cofactor.

Its subcellular location is the cytoplasm. The catalysed reaction is Endonucleolytic cleavage to 5'-phosphomonoester.. In terms of biological role, endonuclease that specifically degrades the RNA of RNA-DNA hybrids. The chain is Ribonuclease HII from Staphylococcus aureus (strain MSSA476).